Here is an 858-residue protein sequence, read N- to C-terminus: DNA replication licensing factor mcm4-A (858 aa).

The disordered stretch occupies residues 1-125 (MSSPTSTPSR…ARKVKQVDLH (125 aa)). Polar residues-rich tracts occupy residues 54 to 68 (SPSG…SSPA) and 79 to 94 (LDLS…SSRV). A C4-type zinc finger spans residues 301–326 (CQVCAFTTRVEIDRGRIAEPSVCKHC). An MCM domain is found at 453-662 (IYERLAAALA…YDRRLAHHLV (210 aa)). The ATP site is built by Y466, R492, K511, S512, N613, R638, R727, and E730. Residues 637 to 640 (SRFD) carry the Arginine finger motif.

It belongs to the MCM family. As to quaternary structure, component of the mcm2-7 complex (RLF-M). The complex forms a toroidal hexameric ring with the proposed subunit order mcm2-mcm6-mcm4-mcm7-mcm3-mcm5. The heterodimer of mmcm3/mcm5 interacts with mcm4, mmcm6, mcm7 and weakly with mcm2. Component of the CMG helicase complex, composed of the mcm2-7 complex, the GINS complex and cdc45. Post-translationally, hyperphosphorylated during mitosis in a mechanism requiring cdc2-cyclin B and other kinases. Undergoes dephosphorylation after exiting mitosis, existing in a partially phosphorylated state in the cytosolic interphase mcm complex which associates with the pre-replication complexes (pre-Rcs). Complete dephosphorylation inactivates the mcm complex, preventing its binding to chromatin. Becomes actively phosphorylated during S phase once the mcm complex is assembled on the chromatin. This chromatin-associated phosphorylation occurs during the activation of the pre-Rcs and is independent of cdks. Phosphorylated by the cdc7-dbf4b complex.

Its subcellular location is the nucleus. It is found in the chromosome. The catalysed reaction is ATP + H2O = ADP + phosphate + H(+). Acts as a component of the MCM2-7 complex (MCM complex) which is the replicative helicase essential for 'once per cell cycle' DNA replication initiation and elongation in eukaryotic cells. Core component of CDC45-MCM-GINS (CMG) helicase, the molecular machine that unwinds template DNA during replication, and around which the replisome is built. The active ATPase sites in the MCM2-7 ring are formed through the interaction surfaces of two neighboring subunits such that a critical structure of a conserved arginine finger motif is provided in trans relative to the ATP-binding site of the Walker A box of the adjacent subunit. The six ATPase active sites, however, are likely to contribute differentially to the complex helicase activity. The protein is DNA replication licensing factor mcm4-A (mcm4-a) of Xenopus laevis (African clawed frog).